A 137-amino-acid chain; its full sequence is Putative pre-16S rRNA nuclease (137 aa).

This sequence belongs to the YqgF nuclease family.

Its subcellular location is the cytoplasm. Functionally, could be a nuclease involved in processing of the 5'-end of pre-16S rRNA. This Bacillus cereus (strain AH187) protein is Putative pre-16S rRNA nuclease.